Consider the following 337-residue polypeptide: Pyridoxal 5'-phosphate synthase subunit PdxS (337 aa).

D65 is a D-ribose 5-phosphate binding site. The active-site Schiff-base intermediate with D-ribose 5-phosphate is the K122. G194 is a D-ribose 5-phosphate binding site. K206 serves as a coordination point for D-glyceraldehyde 3-phosphate. D-ribose 5-phosphate is bound by residues G255 and 276-277 (GS).

This sequence belongs to the PdxS/SNZ family. As to quaternary structure, in the presence of PdxT, forms a dodecamer of heterodimers.

The catalysed reaction is aldehydo-D-ribose 5-phosphate + D-glyceraldehyde 3-phosphate + L-glutamine = pyridoxal 5'-phosphate + L-glutamate + phosphate + 3 H2O + H(+). The protein operates within cofactor biosynthesis; pyridoxal 5'-phosphate biosynthesis. Functionally, catalyzes the formation of pyridoxal 5'-phosphate from ribose 5-phosphate (RBP), glyceraldehyde 3-phosphate (G3P) and ammonia. The ammonia is provided by the PdxT subunit. Can also use ribulose 5-phosphate and dihydroxyacetone phosphate as substrates, resulting from enzyme-catalyzed isomerization of RBP and G3P, respectively. This chain is Pyridoxal 5'-phosphate synthase subunit PdxS, found in Metallosphaera sedula (strain ATCC 51363 / DSM 5348 / JCM 9185 / NBRC 15509 / TH2).